The primary structure comprises 141 residues: Hemoglobin subunit alpha-A (141 aa).

Residues 1–141 (VLSGPDKTNV…VGAVLTAKYR (141 aa)) form the Globin domain. His-58 is an O2 binding site. His-87 serves as a coordination point for heme b.

Belongs to the globin family. Heterotetramer of two alpha chains and two beta chains. Red blood cells.

Its function is as follows. Involved in oxygen transport from the lung to the various peripheral tissues. The polypeptide is Hemoglobin subunit alpha-A (HBAA) (Rhea americana (Greater rhea)).